We begin with the raw amino-acid sequence, 165 residues long: Zinc finger C2H2 protein ECU11_0990 (165 aa).

Composition is skewed to basic and acidic residues over residues 1–10 (MEAESPKERV) and 19–32 (DPER…DTSS). The segment at 1-38 (MEAESPKERVQGVSGESWDPERGVKEREDTSSKKGKGV) is disordered. C2H2-type zinc fingers lie at residues 103–125 (FGCE…KAQH) and 136–158 (LFCP…SRYH).

The chain is Zinc finger C2H2 protein ECU11_0990 from Encephalitozoon cuniculi (strain GB-M1) (Microsporidian parasite).